Consider the following 176-residue polypeptide: Protein singles bar (176 aa).

4 consecutive transmembrane segments (helical) span residues 13 to 35, 71 to 91, 111 to 131, and 140 to 160; these read LGIR…LSRI, FLAT…CYAF, LASC…VVWL, and GFWA…AGIL. The MARVEL domain maps to 30-173; that stretch reads FVLSRIGLLK…DAYLAFRHFR (144 aa).

The protein localises to the membrane. Its function is as follows. Essential for myoblast fusion in developing embryos and pupae, and consequently is essential for muscle formation in adults. Required for progression past the pre-fusion complex stage of myoblast fusion. The chain is Protein singles bar from Drosophila melanogaster (Fruit fly).